A 456-amino-acid chain; its full sequence is SWI/SNF complex component SNF12 homolog (456 aa).

In terms of domain architecture, SWIB/MDM2 spans 234–310 (HVPQKYKVLG…PQLLREHLSP (77 aa)). A disordered region spans residues 435–456 (KQTTPNPTPQQISMAPSTPQTP).

This sequence belongs to the SMARCD family. In terms of assembly, part of a SWI-SNF complex.

Its subcellular location is the nucleus. Its function is as follows. Involved in transcriptional activation and repression of select genes by chromatin remodeling (alteration of DNA-nucleosome topology). The protein is SWI/SNF complex component SNF12 homolog (snf12-1) of Dictyostelium discoideum (Social amoeba).